We begin with the raw amino-acid sequence, 248 residues long: PF03932 family protein CutC (248 aa).

It belongs to the CutC family.

The protein resides in the cytoplasm. This is PF03932 family protein CutC from Photorhabdus laumondii subsp. laumondii (strain DSM 15139 / CIP 105565 / TT01) (Photorhabdus luminescens subsp. laumondii).